The chain runs to 128 residues: Ribonuclease P protein component (128 aa).

This sequence belongs to the RnpA family. In terms of assembly, consists of a catalytic RNA component (M1 or rnpB) and a protein subunit.

It catalyses the reaction Endonucleolytic cleavage of RNA, removing 5'-extranucleotides from tRNA precursor.. RNaseP catalyzes the removal of the 5'-leader sequence from pre-tRNA to produce the mature 5'-terminus. It can also cleave other RNA substrates such as 4.5S RNA. The protein component plays an auxiliary but essential role in vivo by binding to the 5'-leader sequence and broadening the substrate specificity of the ribozyme. The chain is Ribonuclease P protein component from Prochlorococcus marinus (strain MIT 9303).